A 575-amino-acid chain; its full sequence is MEWGRKLYPSAVSGPRSAGGLMFGLPPTAAVDMNQPRGPMTSLKEEPLGSRWAMQPVVDQSNLGIGRAHFEKQPPSNLRKSNFFHFVIALYDRAGQPIEIERTAFIGFIEKDSESDATKTNNGIQYRLQLLYANGARQEQDIFVRLIDSVTKQAIIYEGQDKNPEMCRVLLTHEVMCSRCCDKKSCGNRNETPSDPVIIDRFFLKFFLKCNQNCLKNAGNPRDMRRFQVVISTQVAVDGPLLAISDNMFVHNNSKHGRRAKRLDTTEGTGNTSLSISGHPLAPDSTYDGLYPPLPVATPCIKAISPSEGWTTGGATVIIVGDNFFDGLQVVFGTMLVWSELITSHAIRVQTPPRHIPGVVEVTLSYKSKQFCKGSPGRFVYVSALNEPTIDYGFQRLQKLIPRHPGDPEKLQKEIILKRAADLVEALYSMPRSPGGSTGFNSYAGQLAVSVQDGSGQWTEDDYQRAQSSSVSPRGGYCSSASTPHSSGGSYGATAASAAVAATANGYAPAPNMGTLSSSPGSVFNSTSMSAVSSTWHQAFVQHHHAATAHPHHHYPHPHQPWHNPAVSAATAAAV.

The segment at 79 to 82 is interaction with DNA; the sequence is RKSN. A C5-type zinc finger spans residues 167 to 186; it reads CRVLLTHEVMCSRCCDKKSC. Interaction with DNA regions lie at residues 213–220 and 252–255; these read NCLKNAGN and NNSK. Residues 255 to 278 are disordered; the sequence is KHGRRAKRLDTTEGTGNTSLSISG. Residues 266-276 are compositionally biased toward polar residues; that stretch reads TEGTGNTSLSI. An IPT/TIG domain is found at 299 to 382; sequence PCIKAISPSE…KGSPGRFVYV (84 aa). 2 disordered regions span residues 456–492 and 546–575; these read GQWT…GSYG and AATA…AAAV. Low complexity predominate over residues 479–492; sequence SSASTPHSSGGSYG. Residues 546–557 are compositionally biased toward basic residues; it reads AATAHPHHHYPH. Residues 561-575 are compositionally biased toward low complexity; sequence PWHNPAVSAATAAAV.

The protein belongs to the COE family. In terms of tissue distribution, its expression at the blastoderm stage is restricted to a single stripe of cells corresponding to part of the intercalary and mandibular segment primordia, possibly parasegment O.

It localises to the nucleus. May act as a 'second-level regulator' of head patterning. Required for establishment of the PS(-1)/PS0 parasegmental border and formation of the intercalary segment. Required for expression of the segment polarity genes hedgehog, engrailed and wingless, and the segment-identity genes CAP and collar in the intercalary segment. Required at the onset of the gastrulation for the correct formation of the mandibular segment. The sequence is that of Transcription factor collier (kn) from Drosophila melanogaster (Fruit fly).